We begin with the raw amino-acid sequence, 93 residues long: Co-chaperonin GroES (93 aa).

The protein belongs to the GroES chaperonin family. In terms of assembly, heptamer of 7 subunits arranged in a ring. Interacts with the chaperonin GroEL.

It is found in the cytoplasm. Functionally, together with the chaperonin GroEL, plays an essential role in assisting protein folding. The GroEL-GroES system forms a nano-cage that allows encapsulation of the non-native substrate proteins and provides a physical environment optimized to promote and accelerate protein folding. GroES binds to the apical surface of the GroEL ring, thereby capping the opening of the GroEL channel. This Streptococcus gordonii (strain Challis / ATCC 35105 / BCRC 15272 / CH1 / DL1 / V288) protein is Co-chaperonin GroES.